The sequence spans 228 residues: Thymidylate kinase (228 aa).

Residue Gly-20–Ser-27 coordinates ATP.

Belongs to the thymidylate kinase family.

It catalyses the reaction dTMP + ATP = dTDP + ADP. Its function is as follows. Phosphorylation of dTMP to form dTDP in both de novo and salvage pathways of dTTP synthesis. The protein is Thymidylate kinase of Afipia carboxidovorans (strain ATCC 49405 / DSM 1227 / KCTC 32145 / OM5) (Oligotropha carboxidovorans).